Here is a 419-residue protein sequence, read N- to C-terminus: Vascular endothelial growth factor C (419 aa).

A signal peptide spans 1 to 31 (MHLLGFFSVACSLLAAALLPGPREAPAAAAA). The propeptide at 32–111 (FESGLDLSDA…RTEETIKFAA (80 aa)) is or 102. 3 disulfides stabilise this stretch: Cys-131–Cys-173, Cys-162–Cys-209, and Cys-166–Cys-211. 3 N-linked (GlcNAc...) asparagine glycosylation sites follow: Asn-175, Asn-205, and Asn-240. Positions 228-419 (SLPATLPQCQ…PSYWKRPQMS (192 aa)) are excised as a propeptide. 4 consecutive repeat copies span residues 280 to 295 (CGPN…QCVC), 304 to 319 (CGPH…QCVC), 328 to 343 (CGAN…QCVC), and 347 to 362 (CPRN…ACEC). A 4 X 16 AA repeats of C-X(10)-C-X-C-X(1,3)-C region spans residues 280–362 (CGPNKELDEE…LNPGKCACEC (83 aa)).

This sequence belongs to the PDGF/VEGF growth factor family. In terms of assembly, homodimer; non-covalent and antiparallel. Interacts with FLT4/VEGFR3; the interaction is required for FLT4/VEGFR3 homodimarization and activation. In terms of processing, undergoes a complex proteolytic maturation which generates a variety of processed secreted forms with increased activity toward VEGFR-3, but only the fully processed form could activate VEGFR-2. VEGF-C first form an antiparallel homodimer linked by disulfide bonds. Before secretion, a cleavage occurs between Arg-227 and Ser-228 producing a heterotetramer. The next extracellular step of the processing removes the N-terminal propeptide. Finally the mature VEGF-C is composed mostly of two VEGF homology domains (VHDs) bound by non-covalent interactions. As to expression, expressed in the spleen. Expressed in the lymph node, thymus, appendix and bone marrow. Expressed in the heart, placenta, skeletal muscle, ovary and small intestine. Expressed in the prostate, testis and colon.

The protein resides in the secreted. Growth factor active in angiogenesis, and endothelial cell growth, stimulating their proliferation and migration and also has effects on the permeability of blood vessels. May function in angiogenesis of the venous and lymphatic vascular systems during embryogenesis, and also in the maintenance of differentiated lymphatic endothelium in adults. Binds and activates KDR/VEGFR2 and FLT4/VEGFR3 receptors. In Homo sapiens (Human), this protein is Vascular endothelial growth factor C (VEGFC).